A 216-amino-acid chain; its full sequence is 3-isopropylmalate dehydratase small subunit (216 aa).

Belongs to the LeuD family. LeuD type 1 subfamily. Heterodimer of LeuC and LeuD.

The enzyme catalyses (2R,3S)-3-isopropylmalate = (2S)-2-isopropylmalate. It participates in amino-acid biosynthesis; L-leucine biosynthesis; L-leucine from 3-methyl-2-oxobutanoate: step 2/4. Its function is as follows. Catalyzes the isomerization between 2-isopropylmalate and 3-isopropylmalate, via the formation of 2-isopropylmaleate. This Ralstonia nicotianae (strain ATCC BAA-1114 / GMI1000) (Ralstonia solanacearum) protein is 3-isopropylmalate dehydratase small subunit.